A 304-amino-acid chain; its full sequence is E3 ubiquitin-protein ligase CHIP (304 aa).

The span at 1-10 (MKGKEEKEGG) shows a compositional bias: basic and acidic residues. The segment at 1–30 (MKGKEEKEGGARLGTGGGGSPDKSPSAQEL) is disordered. Residue K2 forms a Glycyl lysine isopeptide (Lys-Gly) (interchain with G-Cter in ubiquitin) linkage. The segment covering 11–20 (ARLGTGGGGS) has biased composition (gly residues). Position 20 is a phosphoserine (S20). Residue K23 forms a Glycyl lysine isopeptide (Lys-Gly) (interchain with G-Cter in ubiquitin) linkage. Residues S24 and S26 each carry the phosphoserine modification. 3 TPR repeats span residues 27-60 (AQEL…NPLV), 61-94 (AVYY…DGQS), and 96-128 (KAHF…AKEQ). The required for interaction with MAPK7 stretch occupies residues 102–201 (GQCQLEMESY…GHIRAQQACI (100 aa)). Residues 143-197 (AKKKRWNSIEERRIHQESELHSYLTRLIAAERERELEECQRNHEGDEDDGHIRAQ) form a required for interaction with and ubiquitination of MYOCD region. The interval 144-198 (KKKRWNSIEERRIHQESELHSYLTRLIAAERERELEECQRNHEGDEDDGHIRAQQ) is required for interaction with FOXO1. Positions 144-304 (KKKRWNSIEE…ISENGWVEDY (161 aa)) are required for ubiquitination of FOXO1. S150 is subject to Phosphoserine. Residues K222 and K256 each participate in a glycyl lysine isopeptide (Lys-Gly) (interchain with G-Cter in ubiquitin) cross-link. A U-box domain is found at 227 to 301 (DIPDYLCGKI…DAFISENGWV (75 aa)). A Phosphoserine modification is found at S274.

As to quaternary structure, homodimer. Interacts with BAG2, and with the E2 ubiquitin conjugating enzymes UBE2D1, UBE2D2 and UBE2D3. Detected in a ternary complex containing STUB1, HSPA1A and HSPBP1. Part of a complex composed of STUB1/CHIP, VCP/p97, CHRNA3, and UBXN2A that modulates the ubiquitination and endoplasmic reticulum-associated degradation (ERAD) of CHRNA3. Within the complex UBXN2A acts as a scaffold protein required for the interaction of CHRNA3 with VCP/p97, this interaction also inhibits CHRNA3 ubiquitination by STUB1/CHIP and subsequently ERAD. Interacts with MKKS. Interacts with DNAAF4. Interacts (via the U-box domain) with the UBE2V2-UBE2N heterodimer; the complex has a specific 'Lys-63'-linked polyubiquitination activity. Interacts (when monoubiquitinated) with ATXN3. Interacts with UBE2W. Interacts with DNAJB6. Interacts with FLCN and HSP90AA1. Interacts with HSP90. Interacts with UBE2N and UBE2V1. Interacts (via TPR repeats) with HSPA8 (via C-terminus). Interacts (via TPR repeats) with HSPA1A (via C-terminus). Interacts with the non-acetylated form of HSPA1A and HSPA1B. Interacts with SMAD3 and HSP90AB1. Interacts with UBE4B. Interacts with PRMT5. Interacts with MYOCD (via C-terminus). Interacts with FOXO1 (when phosphorylated on 'Ser-250'). Interacts with MAPK7/ERK5; the interaction is enhanced in the presence of IGF1 or MAP2K5 and promotes STUB1/CHIP E3 ligase activity. Interacts with and ubiquitinates ESR1; the interaction is promoted in the absence of estradiol (17-beta-estradiol/E2). Interacts with ESR2. Interacts with and ubiquitinates NFATC3; HSPA1A/HSP70 is required as a co-chaperone. In macrophages, interacts with PAQR3; the interaction promotes PPARG poylubiquitination and STUB1-mediated degradation. Component of the chaperone-assisted selective autophagy (CASA) complex consisting of BAG3, HSPA8/HSC70, HSPB8 and STUB1/CHIP. Post-translationally, auto-ubiquitinated; mediated by UBE2D1 and UBE2D2 and enhanced in the presence of MAP2K5. Monoubiquitinated at Lys-2 following cell stress by UBE2W, promoting the interaction with ATXN3. In terms of tissue distribution, expressed in the adventitia layer of the carotid artery (at protein level). Expressed in the CA1 region of the hippocampus (at protein level). Expressed in the uterus (at protein level).

The protein resides in the cytoplasm. The protein localises to the nucleus. Its subcellular location is the mitochondrion. The enzyme catalyses S-ubiquitinyl-[E2 ubiquitin-conjugating enzyme]-L-cysteine + [acceptor protein]-L-lysine = [E2 ubiquitin-conjugating enzyme]-L-cysteine + N(6)-ubiquitinyl-[acceptor protein]-L-lysine.. It functions in the pathway protein modification; protein ubiquitination. E3 ubiquitin-protein ligase which targets misfolded chaperone substrates towards proteasomal degradation. Plays a role in the maintenance of mitochondrial morphology and promotes mitophagic removal of dysfunctional mitochondria; thereby acts as a protector against apoptosis in response to cellular stress. Negatively regulates vascular smooth muscle contraction, via degradation of the transcriptional activator MYOCD and subsequent loss of transcription of genes involved in vascular smooth muscle contraction. Promotes survival and proliferation of cardiac smooth muscle cells via ubiquitination and degradation of FOXO1, resulting in subsequent repression of FOXO1-mediated transcription of pro-apoptotic genes. Ubiquitinates ICER-type isoforms of CREM and targets them for proteasomal degradation, thereby acts as a positive effector of MAPK/ERK-mediated inhibition of apoptosis in cardiomyocytes. Inhibits lipopolysaccharide-induced apoptosis and hypertrophy in cardiomyocytes, via ubiquitination and subsequent proteasomal degradation of NFATC3. Collaborates with ATXN3 in the degradation of misfolded chaperone substrates: ATXN3 restricting the length of ubiquitin chain attached to STUB1/CHIP substrates and preventing further chain extension. Ubiquitinates NOS1 in concert with Hsp70 and Hsp40. Modulates the activity of several chaperone complexes, including Hsp70, Hsc70 and Hsp90. Ubiquitinates CHRNA3 targeting it for endoplasmic reticulum-associated degradation in cortical neurons, as part of the STUB1-VCP-UBXN2A complex. Ubiquitinates and promotes ESR1 proteasomal degradation in response to age-related circulating estradiol (17-beta-estradiol/E2) decline, thereby promotes neuronal apoptosis in response to ischemic reperfusion injury. Mediates transfer of non-canonical short ubiquitin chains to HSPA8 that have no effect on HSPA8 degradation. Mediates polyubiquitination of DNA polymerase beta (POLB) at 'Lys-41', 'Lys-61' and 'Lys-81', thereby playing a role in base-excision repair: catalyzes polyubiquitination by amplifying the HUWE1/ARF-BP1-dependent monoubiquitination and leading to POLB-degradation by the proteasome. Mediates polyubiquitination of CYP3A4. Ubiquitinates EPHA2 and may regulate the receptor stability and activity through proteasomal degradation. Acts as a co-chaperone for HSPA1A and HSPA1B chaperone proteins and promotes ubiquitin-mediated protein degradation. Negatively regulates the suppressive function of regulatory T-cells (Treg) during inflammation by mediating the ubiquitination and degradation of FOXP3 in a HSPA1A/B-dependent manner. Catalyzes monoubiquitination of SIRT6, preventing its degradation by the proteasome. Likely mediates polyubiquitination and down-regulates plasma membrane expression of PD-L1/CD274, an immune inhibitory ligand critical for immune tolerance to self and antitumor immunity. Negatively regulates TGF-beta signaling by modulating the basal level of SMAD3 via ubiquitin-mediated degradation. Plays a role in the degradation of TP53. Mediates ubiquitination of RIPK3 leading to its subsequent proteasome-dependent degradation. May regulate myosin assembly in striated muscles together with UBE4B and VCP/p97 by targeting myosin chaperone UNC45B for proteasomal degradation. Ubiquitinates PPARG in macrophages playing a role in M2 macrophages polarization and angiogenesis. The protein is E3 ubiquitin-protein ligase CHIP of Rattus norvegicus (Rat).